Here is a 390-residue protein sequence, read N- to C-terminus: Formate-dependent phosphoribosylglycinamide formyltransferase (390 aa).

N(1)-(5-phospho-beta-D-ribosyl)glycinamide is bound by residues 18–19 (EL) and Glu-78. Residues Arg-110, Lys-151, 156–161 (SSGKGQ), 191–194 (EEFL), and Glu-199 contribute to the ATP site. The ATP-grasp domain maps to 115-305 (DLASKELNIK…EFELHLRAFL (191 aa)). Glu-264 and Glu-276 together coordinate Mg(2+). Residues Asp-283, Lys-353, and 360–361 (RR) contribute to the N(1)-(5-phospho-beta-D-ribosyl)glycinamide site.

Belongs to the PurK/PurT family. Homodimer.

It catalyses the reaction N(1)-(5-phospho-beta-D-ribosyl)glycinamide + formate + ATP = N(2)-formyl-N(1)-(5-phospho-beta-D-ribosyl)glycinamide + ADP + phosphate + H(+). It functions in the pathway purine metabolism; IMP biosynthesis via de novo pathway; N(2)-formyl-N(1)-(5-phospho-D-ribosyl)glycinamide from N(1)-(5-phospho-D-ribosyl)glycinamide (formate route): step 1/1. In terms of biological role, involved in the de novo purine biosynthesis. Catalyzes the transfer of formate to 5-phospho-ribosyl-glycinamide (GAR), producing 5-phospho-ribosyl-N-formylglycinamide (FGAR). Formate is provided by PurU via hydrolysis of 10-formyl-tetrahydrofolate. The chain is Formate-dependent phosphoribosylglycinamide formyltransferase from Prochlorococcus marinus (strain MIT 9515).